The sequence spans 171 residues: Transcription elongation factor GreB (171 aa).

A coiled-coil region spans residues 53-75 (KKRLREIDRRVRFLAKRLEVLKI).

The protein belongs to the GreA/GreB family. GreB subfamily.

In terms of biological role, necessary for efficient RNA polymerase transcription elongation past template-encoded arresting sites. The arresting sites in DNA have the property of trapping a certain fraction of elongating RNA polymerases that pass through, resulting in locked ternary complexes. Cleavage of the nascent transcript by cleavage factors such as GreA or GreB allows the resumption of elongation from the new 3'terminus. GreB releases sequences of up to 9 nucleotides in length. In Yersinia pestis, this protein is Transcription elongation factor GreB.